A 320-amino-acid polypeptide reads, in one-letter code: HPr kinase/phosphorylase (320 aa).

Residues His-141 and Lys-162 contribute to the active site. 156 to 163 (GHSGLGKS) provides a ligand contact to ATP. Ser-163 contacts Mg(2+). The active-site Proton acceptor; for phosphorylation activity. Proton donor; for dephosphorylation activity is the Asp-180. The segment at 204-213 (LEVRGLGILN) is important for the catalytic mechanism of both phosphorylation and dephosphorylation. Glu-205 contributes to the Mg(2+) binding site. Residue Arg-248 is part of the active site. Residues 269–274 (PVAVGR) are important for the catalytic mechanism of dephosphorylation.

Belongs to the HPrK/P family. Homohexamer. Requires Mg(2+) as cofactor.

The catalysed reaction is [HPr protein]-L-serine + ATP = [HPr protein]-O-phospho-L-serine + ADP + H(+). It carries out the reaction [HPr protein]-O-phospho-L-serine + phosphate + H(+) = [HPr protein]-L-serine + diphosphate. In terms of biological role, catalyzes the ATP- as well as the pyrophosphate-dependent phosphorylation of a specific serine residue in HPr, a phosphocarrier protein of the phosphoenolpyruvate-dependent sugar phosphotransferase system (PTS). HprK/P also catalyzes the pyrophosphate-producing, inorganic phosphate-dependent dephosphorylation (phosphorolysis) of seryl-phosphorylated HPr (P-Ser-HPr). In Neisseria meningitidis serogroup B (strain ATCC BAA-335 / MC58), this protein is HPr kinase/phosphorylase.